Reading from the N-terminus, the 532-residue chain is CTP synthase (532 aa).

The amidoligase domain stretch occupies residues methionine 1–leucine 267. A CTP-binding site is contributed by serine 13. Residue serine 13 participates in UTP binding. ATP is bound at residue serine 14–isoleucine 19. Position 54 (tyrosine 54) interacts with L-glutamine. Residue aspartate 71 participates in ATP binding. Mg(2+)-binding residues include aspartate 71 and glutamate 141. CTP contacts are provided by residues aspartate 148–glutamate 150, lysine 188–glutamine 193, and lysine 224. Residues lysine 188–glutamine 193 and lysine 224 each bind UTP. Residues glutamate 292–arginine 532 form the Glutamine amidotransferase type-1 domain. Glycine 354 serves as a coordination point for L-glutamine. Cysteine 381 acts as the Nucleophile; for glutamine hydrolysis in catalysis. L-glutamine contacts are provided by residues leucine 382 to glutamine 385, glutamate 405, and arginine 462. Residues histidine 507 and glutamate 509 contribute to the active site.

The protein belongs to the CTP synthase family. Homotetramer.

The enzyme catalyses UTP + L-glutamine + ATP + H2O = CTP + L-glutamate + ADP + phosphate + 2 H(+). The catalysed reaction is L-glutamine + H2O = L-glutamate + NH4(+). It catalyses the reaction UTP + NH4(+) + ATP = CTP + ADP + phosphate + 2 H(+). It participates in pyrimidine metabolism; CTP biosynthesis via de novo pathway; CTP from UDP: step 2/2. Its activity is regulated as follows. Allosterically activated by GTP, when glutamine is the substrate; GTP has no effect on the reaction when ammonia is the substrate. The allosteric effector GTP functions by stabilizing the protein conformation that binds the tetrahedral intermediate(s) formed during glutamine hydrolysis. Inhibited by the product CTP, via allosteric rather than competitive inhibition. Its function is as follows. Catalyzes the ATP-dependent amination of UTP to CTP with either L-glutamine or ammonia as the source of nitrogen. Regulates intracellular CTP levels through interactions with the four ribonucleotide triphosphates. This Desulfitobacterium hafniense (strain Y51) protein is CTP synthase.